A 101-amino-acid polypeptide reads, in one-letter code: Protein S100-A11 (101 aa).

2 EF-hand domains span residues 13–48 (IESL…ELAS) and 54–89 (KDPA…IAVA). 8 residues coordinate Ca(2+): Asn30, Lys32, Glu37, Asp67, Asn69, Asp71, Gln73, and Glu78.

Belongs to the S-100 family. Homodimer; disulfide-linked. As to expression, smooth muscle and non-muscle tissues.

This chain is Protein S100-A11 (S100A11), found in Gallus gallus (Chicken).